Here is a 148-residue protein sequence, read N- to C-terminus: Urease accessory protein UreE (148 aa).

It belongs to the UreE family.

Its subcellular location is the cytoplasm. In terms of biological role, involved in urease metallocenter assembly. Binds nickel. Probably functions as a nickel donor during metallocenter assembly. This Lysinibacillus sphaericus (strain C3-41) protein is Urease accessory protein UreE.